Here is a 280-residue protein sequence, read N- to C-terminus: Energy-coupling factor transporter ATP-binding protein EcfA1 (280 aa).

The ABC transporter domain occupies 6–244 (IECKNVVYKY…VPLMKNIGLD (239 aa)). Residue 43–50 (GHNGSGKS) participates in ATP binding.

Belongs to the ABC transporter superfamily. Energy-coupling factor EcfA family. Forms a stable energy-coupling factor (ECF) transporter complex composed of 2 membrane-embedded substrate-binding proteins (S component), 2 ATP-binding proteins (A component) and 2 transmembrane proteins (T component).

The protein localises to the cell membrane. Its function is as follows. ATP-binding (A) component of a common energy-coupling factor (ECF) ABC-transporter complex. Unlike classic ABC transporters this ECF transporter provides the energy necessary to transport a number of different substrates. In Clostridium novyi (strain NT), this protein is Energy-coupling factor transporter ATP-binding protein EcfA1.